We begin with the raw amino-acid sequence, 838 residues long: Protein translocase subunit SecA (838 aa).

ATP contacts are provided by residues Q86, 104 to 108 (GEGKT), and D493. The segment at 793–838 (NTQAVSGGEDSGKKKTKKPVVKSNTVKRNDPCPCGSGKKYKNCHGQ) is disordered. The Zn(2+) site is built by C824, C826, C835, and H836.

The protein belongs to the SecA family. Monomer and homodimer. Part of the essential Sec protein translocation apparatus which comprises SecA, SecYEG and auxiliary proteins SecDF. Other proteins may also be involved. The cofactor is Zn(2+).

It is found in the cell membrane. The protein resides in the cytoplasm. It catalyses the reaction ATP + H2O + cellular proteinSide 1 = ADP + phosphate + cellular proteinSide 2.. In terms of biological role, part of the Sec protein translocase complex. Interacts with the SecYEG preprotein conducting channel. Has a central role in coupling the hydrolysis of ATP to the transfer of proteins into and across the cell membrane, serving as an ATP-driven molecular motor driving the stepwise translocation of polypeptide chains across the membrane. The chain is Protein translocase subunit SecA from Oceanobacillus iheyensis (strain DSM 14371 / CIP 107618 / JCM 11309 / KCTC 3954 / HTE831).